A 152-amino-acid chain; its full sequence is Xanthine-guanine phosphoribosyltransferase (152 aa).

5-phospho-alpha-D-ribose 1-diphosphate-binding positions include 37–38 and 88–96; these read RG and DDLVDTGNT. Residue aspartate 89 coordinates Mg(2+). Guanine is bound by residues aspartate 92 and isoleucine 135. The xanthine site is built by aspartate 92 and isoleucine 135. GMP is bound by residues 92–96 and 134–135; these read DTGNT and WI.

This sequence belongs to the purine/pyrimidine phosphoribosyltransferase family. XGPT subfamily. Homotetramer. Mg(2+) serves as cofactor.

The protein resides in the cell inner membrane. The enzyme catalyses GMP + diphosphate = guanine + 5-phospho-alpha-D-ribose 1-diphosphate. It catalyses the reaction XMP + diphosphate = xanthine + 5-phospho-alpha-D-ribose 1-diphosphate. The catalysed reaction is IMP + diphosphate = hypoxanthine + 5-phospho-alpha-D-ribose 1-diphosphate. It functions in the pathway purine metabolism; GMP biosynthesis via salvage pathway; GMP from guanine: step 1/1. The protein operates within purine metabolism; XMP biosynthesis via salvage pathway; XMP from xanthine: step 1/1. Functionally, purine salvage pathway enzyme that catalyzes the transfer of the ribosyl-5-phosphate group from 5-phospho-alpha-D-ribose 1-diphosphate (PRPP) to the N9 position of the 6-oxopurines guanine and xanthine to form the corresponding ribonucleotides GMP (guanosine 5'-monophosphate) and XMP (xanthosine 5'-monophosphate), with the release of PPi. To a lesser extent, also acts on hypoxanthine. The sequence is that of Xanthine-guanine phosphoribosyltransferase from Actinobacillus succinogenes (strain ATCC 55618 / DSM 22257 / CCUG 43843 / 130Z).